The primary structure comprises 238 residues: Orotidine 5'-phosphate decarboxylase (238 aa).

Residues Asp-10, Lys-32, Asp-59–Thr-68, Thr-122, Arg-184, Gln-193, Gly-213, and Arg-214 each bind substrate. Lys-61 functions as the Proton donor in the catalytic mechanism.

The protein belongs to the OMP decarboxylase family. Type 1 subfamily. As to quaternary structure, homodimer.

The catalysed reaction is orotidine 5'-phosphate + H(+) = UMP + CO2. Its pathway is pyrimidine metabolism; UMP biosynthesis via de novo pathway; UMP from orotate: step 2/2. In terms of biological role, catalyzes the decarboxylation of orotidine 5'-monophosphate (OMP) to uridine 5'-monophosphate (UMP). The chain is Orotidine 5'-phosphate decarboxylase from Bacillus mycoides (strain KBAB4) (Bacillus weihenstephanensis).